Reading from the N-terminus, the 165-residue chain is Glutamyl-tRNA(Gln) amidotransferase subunit F, mitochondrial (165 aa).

Residues 1–19 (MKSILRSTTRNLITSSRRF) constitute a mitochondrion transit peptide.

The protein belongs to the GatF family. In terms of assembly, subunit of the heterotrimeric GatFAB amidotransferase (AdT) complex, composed of A, B and F subunits.

It is found in the mitochondrion inner membrane. It catalyses the reaction L-glutamyl-tRNA(Gln) + L-glutamine + ATP + H2O = L-glutaminyl-tRNA(Gln) + L-glutamate + ADP + phosphate + H(+). Its function is as follows. Allows the formation of correctly charged Gln-tRNA(Gln) through the transamidation of misacylated Glu-tRNA(Gln) in the mitochondria. The reaction takes place in the presence of glutamine and ATP through an activated gamma-phospho-Glu-tRNA(Gln). Required for proper protein synthesis within the mitochondrion. In Candida albicans (strain SC5314 / ATCC MYA-2876) (Yeast), this protein is Glutamyl-tRNA(Gln) amidotransferase subunit F, mitochondrial.